Consider the following 291-residue polypeptide: Neugrin (291 aa).

The first 15 residues, Met-1–Ala-15, serve as a signal peptide directing secretion. The disordered stretch occupies residues Val-27–Glu-49. Acidic residues predominate over residues Pro-39 to Glu-49. Ser-41 carries the post-translational modification Phosphoserine. Residue Asn-158 is glycosylated (N-linked (GlcNAc...) asparagine). The segment at Val-224 to Ser-270 is disordered. Residues Gln-256 to Glu-265 are compositionally biased toward basic and acidic residues.

The protein belongs to the neugrin family. As to quaternary structure, forms a regulatory protein-RNA complex, consisting of RCC1L, NGRN, RPUSD3, RPUSD4, TRUB2, FASTKD2 and 16S mt-rRNA. Interacts with 16S mt-rRNA; this interaction is direct.

It localises to the nucleus. The protein localises to the secreted. The protein resides in the mitochondrion membrane. Its function is as follows. Plays an essential role in mitochondrial ribosome biogenesis. As a component of a functional protein-RNA module, consisting of RCC1L, NGRN, RPUSD3, RPUSD4, TRUB2, FASTKD2 and 16S mitochondrial ribosomal RNA (16S mt-rRNA), controls 16S mt-rRNA abundance and is required for intra-mitochondrial translation of core subunits of the oxidative phosphorylation system. The sequence is that of Neugrin (NGRN) from Pongo abelii (Sumatran orangutan).